The sequence spans 97 residues: Co-chaperonin GroES (97 aa).

The protein belongs to the GroES chaperonin family. In terms of assembly, heptamer of 7 subunits arranged in a ring. Interacts with the chaperonin GroEL.

Its subcellular location is the cytoplasm. Its function is as follows. Together with the chaperonin GroEL, plays an essential role in assisting protein folding. The GroEL-GroES system forms a nano-cage that allows encapsulation of the non-native substrate proteins and provides a physical environment optimized to promote and accelerate protein folding. GroES binds to the apical surface of the GroEL ring, thereby capping the opening of the GroEL channel. This Symbiobacterium thermophilum (strain DSM 24528 / JCM 14929 / IAM 14863 / T) protein is Co-chaperonin GroES.